A 338-amino-acid chain; its full sequence is CDP-paratose 2-epimerase (338 aa).

Thr-124 contacts substrate. Tyr-164 serves as the catalytic Proton acceptor.

It belongs to the NAD(P)-dependent epimerase/dehydratase family. In terms of assembly, homotetramer. The cofactor is NAD(+).

It carries out the reaction CDP-alpha-D-paratose = CDP-3,6-dideoxy-alpha-D-mannose. Its pathway is nucleotide-sugar biosynthesis; CDP-3,6-dideoxy-D-mannose biosynthesis; CDP-3,6-dideoxy-D-mannose from CTP and alpha-D-glucose 1-phosphate: step 5/5. In terms of biological role, catalyzes the isomeration of CDP-paratose to CDP-tyvelose. This chain is CDP-paratose 2-epimerase (rfbE), found in Salmonella typhi.